Here is a 96-residue protein sequence, read N- to C-terminus: Co-chaperonin GroES 2 (96 aa).

Belongs to the GroES chaperonin family. As to quaternary structure, heptamer of 7 subunits arranged in a ring. Interacts with the chaperonin GroEL.

The protein localises to the cytoplasm. Functionally, together with the chaperonin GroEL, plays an essential role in assisting protein folding. The GroEL-GroES system forms a nano-cage that allows encapsulation of the non-native substrate proteins and provides a physical environment optimized to promote and accelerate protein folding. GroES binds to the apical surface of the GroEL ring, thereby capping the opening of the GroEL channel. The polypeptide is Co-chaperonin GroES 2 (Vibrio vulnificus (strain CMCP6)).